A 650-amino-acid polypeptide reads, in one-letter code: Acetyl-coenzyme A synthetase (650 aa).

CoA is bound by residues 190–193 (RGGR), T308, and N332. Residues 384–386 (GEP), 408–413 (DTWWQT), D497, and R512 contribute to the ATP site. Residue S520 coordinates CoA. ATP is bound at residue R523. Mg(2+) contacts are provided by V534, H536, and V539. R581 serves as a coordination point for CoA. An N6-acetyllysine modification is found at K606.

Belongs to the ATP-dependent AMP-binding enzyme family. The cofactor is Mg(2+). Post-translationally, acetylated. Deacetylation by the SIR2-homolog deacetylase activates the enzyme.

It carries out the reaction acetate + ATP + CoA = acetyl-CoA + AMP + diphosphate. Functionally, catalyzes the conversion of acetate into acetyl-CoA (AcCoA), an essential intermediate at the junction of anabolic and catabolic pathways. AcsA undergoes a two-step reaction. In the first half reaction, AcsA combines acetate with ATP to form acetyl-adenylate (AcAMP) intermediate. In the second half reaction, it can then transfer the acetyl group from AcAMP to the sulfhydryl group of CoA, forming the product AcCoA. The chain is Acetyl-coenzyme A synthetase from Bradyrhizobium sp. (strain ORS 278).